We begin with the raw amino-acid sequence, 248 residues long: tRNA (guanine-N(1)-)-methyltransferase (248 aa).

Residues G113 and I133–L138 contribute to the S-adenosyl-L-methionine site. The tract at residues A226–G248 is disordered. The span at A234–G248 shows a compositional bias: basic and acidic residues.

The protein belongs to the RNA methyltransferase TrmD family. Homodimer.

Its subcellular location is the cytoplasm. It carries out the reaction guanosine(37) in tRNA + S-adenosyl-L-methionine = N(1)-methylguanosine(37) in tRNA + S-adenosyl-L-homocysteine + H(+). Its function is as follows. Specifically methylates guanosine-37 in various tRNAs. This Rhodopseudomonas palustris (strain ATCC BAA-98 / CGA009) protein is tRNA (guanine-N(1)-)-methyltransferase.